A 493-amino-acid polypeptide reads, in one-letter code: Telomere-binding protein subunit alpha (493 aa).

Residues 1 to 30 (MSSAKRSTSRVSKKKAAPAKDGAPKKREQS) form a disordered region. The span at 7-17 (STSRVSKKKAA) shows a compositional bias: basic residues.

Belongs to the telombin family. In terms of assembly, heterodimer of an alpha and a beta subunit.

The protein localises to the nucleus. It is found in the chromosome. Its subcellular location is the telomere. May function as protective capping of the single-stranded telomeric overhang. May also participate in telomere length regulation during DNA replication. In Stylonychia mytilus (Ciliate), this protein is Telomere-binding protein subunit alpha (STY56V).